Reading from the N-terminus, the 329-residue chain is 4-hydroxythreonine-4-phosphate dehydrogenase (329 aa).

Substrate contacts are provided by H136 and T137. A divalent metal cation-binding residues include H166, H211, and H266. Substrate contacts are provided by K274, N283, and R292.

This sequence belongs to the PdxA family. Homodimer. It depends on Zn(2+) as a cofactor. Requires Mg(2+) as cofactor. The cofactor is Co(2+).

It is found in the cytoplasm. The enzyme catalyses 4-(phosphooxy)-L-threonine + NAD(+) = 3-amino-2-oxopropyl phosphate + CO2 + NADH. Its pathway is cofactor biosynthesis; pyridoxine 5'-phosphate biosynthesis; pyridoxine 5'-phosphate from D-erythrose 4-phosphate: step 4/5. Functionally, catalyzes the NAD(P)-dependent oxidation of 4-(phosphooxy)-L-threonine (HTP) into 2-amino-3-oxo-4-(phosphooxy)butyric acid which spontaneously decarboxylates to form 3-amino-2-oxopropyl phosphate (AHAP). The chain is 4-hydroxythreonine-4-phosphate dehydrogenase from Neisseria meningitidis serogroup B (strain ATCC BAA-335 / MC58).